A 1872-amino-acid chain; its full sequence is Chitin synthase 6 (1872 aa).

The interval 1–23 is disordered; that stretch reads MAQHLPPVGGNGGAHTQPSLPAL. A Myosin motor domain is found at 1-779; that stretch reads MAQHLPPVGG…CWMEIAQLSD (779 aa). 104-111 contacts ATP; that stretch reads GESGSGKT. Asparagine 123, asparagine 291, asparagine 428, and asparagine 559 each carry an N-linked (GlcNAc...) asparagine glycan. The tract at residues 587–652 is disordered; sequence VMQASVSSKP…VNKPSEEGAS (66 aa). The actin-binding stretch occupies residues 659 to 683; it reads LDNVTKSFHAQNTNAYFVFCLKPND. Asparagine 661 is a glycosylation site (N-linked (GlcNAc...) asparagine). The next 2 helical transmembrane spans lie at 881 to 901 and 920 to 940; these read WVFI…QHLG and FIIW…PMLV. The region spanning 944–1003 is the Cytochrome b5 heme-binding domain; sequence QYVFTGEELSAYNGKDGKASYAAIRGQVFDIGSFIPRHPLPYLPSKLFTQYAGTDITGLF. N-linked (GlcNAc...) asparagine glycans are attached at residues asparagine 1030, asparagine 1055, and asparagine 1120. A helical transmembrane segment spans residues 1193-1213; sequence FILAVTIILCSIIAFKFLAAL. N-linked (GlcNAc...) asparagine glycosylation is found at asparagine 1450 and asparagine 1556. The next 3 helical transmembrane spans lie at 1581 to 1601, 1614 to 1634, and 1641 to 1661; these read FIVF…AYIV, VPVL…IIFI, and MIAW…GLPL. Residues 1814–1869 form the DEK-C domain; the sequence is LPSDDALLAEIREILRTADLMTVTKKGVKQELERRFGVNLDSRRAYINSATEALLS.

This sequence belongs to the chitin synthase family. Class V subfamily.

It is found in the cell membrane. The catalysed reaction is [(1-&gt;4)-N-acetyl-beta-D-glucosaminyl](n) + UDP-N-acetyl-alpha-D-glucosamine = [(1-&gt;4)-N-acetyl-beta-D-glucosaminyl](n+1) + UDP + H(+). Its function is as follows. Polymerizes chitin, a structural polymer of the cell wall and septum, by transferring the sugar moiety of UDP-GlcNAc to the non-reducing end of the growing chitin polymer. Required for appressorium penetration and invasive growth. The protein is Chitin synthase 6 of Pyricularia oryzae (strain 70-15 / ATCC MYA-4617 / FGSC 8958) (Rice blast fungus).